Here is a 194-residue protein sequence, read N- to C-terminus: uncharacterized protein (194 aa).

The 159-residue stretch at 34–192 (VMQCLLGGNK…CELVDQTLFP (159 aa)) folds into the SIS domain.

This sequence belongs to the SIS family. DiaA subfamily.

This is an uncharacterized protein from Haemophilus influenzae (strain ATCC 51907 / DSM 11121 / KW20 / Rd).